Consider the following 389-residue polypeptide: Dual-specificity RNA methyltransferase RlmN (389 aa).

Glu-94 acts as the Proton acceptor in catalysis. The region spanning 134–367 (PRVRVTQCIS…CFVRRRRGDD (234 aa)) is the Radical SAM core domain. A disulfide bond links Cys-141 and Cys-372. [4Fe-4S] cluster is bound by residues Cys-148, Cys-152, and Cys-155. Residues 197–198 (GE), Ser-229, 253–255 (SLH), and Asn-329 each bind S-adenosyl-L-methionine. Cys-372 functions as the S-methylcysteine intermediate in the catalytic mechanism.

Belongs to the radical SAM superfamily. RlmN family. [4Fe-4S] cluster serves as cofactor.

The protein resides in the cytoplasm. It catalyses the reaction adenosine(2503) in 23S rRNA + 2 reduced [2Fe-2S]-[ferredoxin] + 2 S-adenosyl-L-methionine = 2-methyladenosine(2503) in 23S rRNA + 5'-deoxyadenosine + L-methionine + 2 oxidized [2Fe-2S]-[ferredoxin] + S-adenosyl-L-homocysteine. It carries out the reaction adenosine(37) in tRNA + 2 reduced [2Fe-2S]-[ferredoxin] + 2 S-adenosyl-L-methionine = 2-methyladenosine(37) in tRNA + 5'-deoxyadenosine + L-methionine + 2 oxidized [2Fe-2S]-[ferredoxin] + S-adenosyl-L-homocysteine. Functionally, specifically methylates position 2 of adenine 2503 in 23S rRNA and position 2 of adenine 37 in tRNAs. m2A2503 modification seems to play a crucial role in the proofreading step occurring at the peptidyl transferase center and thus would serve to optimize ribosomal fidelity. The polypeptide is Dual-specificity RNA methyltransferase RlmN (Sorangium cellulosum (strain So ce56) (Polyangium cellulosum (strain So ce56))).